A 917-amino-acid chain; its full sequence is Isoleucine--tRNA ligase (917 aa).

The 'HIGH' region signature appears at P57–H67. E554 is an L-isoleucyl-5'-AMP binding site. A 'KMSKS' region motif is present at residues K595 to S599. K598 is a binding site for ATP. Residues C886, C889, C906, and C909 each contribute to the Zn(2+) site.

It belongs to the class-I aminoacyl-tRNA synthetase family. IleS type 1 subfamily. In terms of assembly, monomer. Requires Zn(2+) as cofactor.

The protein localises to the cytoplasm. The catalysed reaction is tRNA(Ile) + L-isoleucine + ATP = L-isoleucyl-tRNA(Ile) + AMP + diphosphate. Catalyzes the attachment of isoleucine to tRNA(Ile). As IleRS can inadvertently accommodate and process structurally similar amino acids such as valine, to avoid such errors it has two additional distinct tRNA(Ile)-dependent editing activities. One activity is designated as 'pretransfer' editing and involves the hydrolysis of activated Val-AMP. The other activity is designated 'posttransfer' editing and involves deacylation of mischarged Val-tRNA(Ile). In Staphylococcus aureus (strain Mu3 / ATCC 700698), this protein is Isoleucine--tRNA ligase.